A 146-amino-acid polypeptide reads, in one-letter code: Large ribosomal subunit protein uL15 (146 aa).

Residues 1–13 are compositionally biased toward basic and acidic residues; it reads MKLHELRPAEGSK. Positions 1-54 are disordered; the sequence is MKLHELRPAEGSKKAPKRVGRGNGSGLGKTAGKGHKGQNARSGGGVRPGFEGGQ. Gly residues-rich tracts occupy residues 21 to 31 and 42 to 52; these read RGNGSGLGKTA and SGGGVRPGFEG.

This sequence belongs to the universal ribosomal protein uL15 family. Part of the 50S ribosomal subunit.

Its function is as follows. Binds to the 23S rRNA. This is Large ribosomal subunit protein uL15 from Clostridium novyi (strain NT).